A 503-amino-acid chain; its full sequence is Aspartyl/glutamyl-tRNA(Asn/Gln) amidotransferase subunit B (503 aa).

The protein belongs to the GatB/GatE family. GatB subfamily. As to quaternary structure, heterotrimer of A, B and C subunits.

It carries out the reaction L-glutamyl-tRNA(Gln) + L-glutamine + ATP + H2O = L-glutaminyl-tRNA(Gln) + L-glutamate + ADP + phosphate + H(+). It catalyses the reaction L-aspartyl-tRNA(Asn) + L-glutamine + ATP + H2O = L-asparaginyl-tRNA(Asn) + L-glutamate + ADP + phosphate + 2 H(+). Its function is as follows. Allows the formation of correctly charged Asn-tRNA(Asn) or Gln-tRNA(Gln) through the transamidation of misacylated Asp-tRNA(Asn) or Glu-tRNA(Gln) in organisms which lack either or both of asparaginyl-tRNA or glutaminyl-tRNA synthetases. The reaction takes place in the presence of glutamine and ATP through an activated phospho-Asp-tRNA(Asn) or phospho-Glu-tRNA(Gln). The sequence is that of Aspartyl/glutamyl-tRNA(Asn/Gln) amidotransferase subunit B from Mycolicibacterium smegmatis (strain ATCC 700084 / mc(2)155) (Mycobacterium smegmatis).